The sequence spans 353 residues: F-box protein At3g58530 (353 aa).

The 49-residue stretch at 8–56 (EEEEETWRREIVTSVMRLVSTRLPQTDLISLLLVSPWLYRTLISYPSIW) folds into the F-box; degenerate domain.

The sequence is that of F-box protein At3g58530 from Arabidopsis thaliana (Mouse-ear cress).